Reading from the N-terminus, the 135-residue chain is uncharacterized protein (135 aa).

The HTH merR-type domain occupies 2 to 71 (TYTTAKAAEK…LKDIKRFAEC (70 aa)). A DNA-binding region (H-T-H motif) is located at residues 5 to 24 (TAKAAEKIGISAYTLRFYDK).

This is an uncharacterized protein from Haemophilus influenzae (strain ATCC 51907 / DSM 11121 / KW20 / Rd).